Reading from the N-terminus, the 151-residue chain is Putative phosphatidylglycerol/phosphatidylinositol transfer protein 3 (151 aa).

The signal sequence occupies residues 1 to 26; that stretch reads MKYSQNQIVYVIFFFIILIVVKPIES.

This sequence belongs to the NPC2 family. In terms of assembly, monomer.

Its function is as follows. Catalyzes the intermembrane transfer of phosphatidylglycerol and phosphatidylinositol. The polypeptide is Putative phosphatidylglycerol/phosphatidylinositol transfer protein 3 (Dictyostelium discoideum (Social amoeba)).